A 453-amino-acid polypeptide reads, in one-letter code: Prenyltransferase nscD (453 aa).

Arginine 118, lysine 200, tyrosine 202, lysine 271, tyrosine 273, and tyrosine 428 together coordinate dimethylallyl diphosphate.

This sequence belongs to the tryptophan dimethylallyltransferase family.

Its pathway is secondary metabolite biosynthesis. Functionally, prenyltransferase; part of the gene cluster that mediates the biosynthesis of neosartoricin, a prenylated anthracenone that exhibits T-cell antiproliferative activity, suggestive of a physiological role as an immunosuppressive agent. The non-reducing polyketide synthase nscA probably synthesizes and cyclizes the decaketide backbone. The hydrolase nscB then mediates the product release through hydrolysis followed by spontaneous decarboxylation. The prenyltransferase nscD catalyzes the addition of the dimethylallyl group to the aromatic C5. The FAD-dependent monooxygenase nscC is then responsible for the stereospecific hydroxylation at C2. There is no gene encoding O-acetyltransferase in the nsc gene cluster; thus, the last step of 2-O-acetylation leading to neosartoricin may be catalyzed by an unidentified O-acetyltransferase. This Aspergillus fumigatus (strain ATCC MYA-4609 / CBS 101355 / FGSC A1100 / Af293) (Neosartorya fumigata) protein is Prenyltransferase nscD.